A 106-amino-acid polypeptide reads, in one-letter code: UPF0060 membrane protein CHU_3331 (106 aa).

A run of 4 helical transmembrane segments spans residues 5-25 (FYFILAAFCEISGCYLFWLHF), 31-51 (ALLLLPAAACLLVFAYLLTKI), 59-79 (AYAVYGGIYIVCSLAWMYGIE), and 85-105 (IWDYIGVGICLIGASVILFAP).

It belongs to the UPF0060 family.

Its subcellular location is the cell inner membrane. The polypeptide is UPF0060 membrane protein CHU_3331 (Cytophaga hutchinsonii (strain ATCC 33406 / DSM 1761 / CIP 103989 / NBRC 15051 / NCIMB 9469 / D465)).